A 234-amino-acid chain; its full sequence is Phosphoribosylaminoimidazole-succinocarboxamide synthase (234 aa).

It belongs to the SAICAR synthetase family.

The catalysed reaction is 5-amino-1-(5-phospho-D-ribosyl)imidazole-4-carboxylate + L-aspartate + ATP = (2S)-2-[5-amino-1-(5-phospho-beta-D-ribosyl)imidazole-4-carboxamido]succinate + ADP + phosphate + 2 H(+). The protein operates within purine metabolism; IMP biosynthesis via de novo pathway; 5-amino-1-(5-phospho-D-ribosyl)imidazole-4-carboxamide from 5-amino-1-(5-phospho-D-ribosyl)imidazole-4-carboxylate: step 1/2. The sequence is that of Phosphoribosylaminoimidazole-succinocarboxamide synthase from Pyrobaculum aerophilum (strain ATCC 51768 / DSM 7523 / JCM 9630 / CIP 104966 / NBRC 100827 / IM2).